The sequence spans 82 residues: Short neurotoxin OKI-10 (82 aa).

A signal peptide spans 1-20; the sequence is KTLLLTLVVVTIVCLDLGYT. Cystine bridges form between Cys23/Cys44, Cys37/Cys61, Cys63/Cys74, and Cys75/Cys80.

The protein belongs to the three-finger toxin family. Short-chain subfamily. Type I alpha-neurotoxin sub-subfamily. As to expression, expressed by the venom gland.

The protein localises to the secreted. In terms of biological role, binds to muscle nicotinic acetylcholine receptor (nAChR) and inhibit acetylcholine from binding to the receptor, thereby impairing neuromuscular transmission. In Laticauda laticaudata (Blue-ringed sea krait), this protein is Short neurotoxin OKI-10.